Reading from the N-terminus, the 194-residue chain is uncharacterized protein (194 aa).

An N-terminal signal peptide occupies residues 1–15 (MFVLSIALLSCTTLC). The PAN domain maps to 49 to 134 (CPQGLHADAI…KATYYEKIRC (86 aa)). Intrachain disulfides connect cysteine 49-cysteine 134 and cysteine 79-cysteine 106.

This is an uncharacterized protein from Caenorhabditis elegans.